The sequence spans 130 residues: ATP synthase epsilon chain (130 aa).

Belongs to the ATPase epsilon chain family. In terms of assembly, F-type ATPases have 2 components, CF(1) - the catalytic core - and CF(0) - the membrane proton channel. CF(1) has five subunits: alpha(3), beta(3), gamma(1), delta(1), epsilon(1). CF(0) has three main subunits: a, b and c.

The protein resides in the cell membrane. Produces ATP from ADP in the presence of a proton gradient across the membrane. The protein is ATP synthase epsilon chain of Nocardia farcinica (strain IFM 10152).